Reading from the N-terminus, the 122-residue chain is Large ribosomal subunit protein bL17 (122 aa).

Belongs to the bacterial ribosomal protein bL17 family. As to quaternary structure, part of the 50S ribosomal subunit. Contacts protein L32.

This is Large ribosomal subunit protein bL17 from Neisseria meningitidis serogroup C / serotype 2a (strain ATCC 700532 / DSM 15464 / FAM18).